Consider the following 419-residue polypeptide: Transcription regulator lscL (419 aa).

Positions 12–35 (RIRKVKCDEKKPCCQKCIDTGRTC) form a DNA-binding region, zn(2)-C6 fungal-type.

The protein resides in the nucleus. Transcription factor that may coregulate the expression of the gene cluster that mediates the biosynthesis of the lipopeptide antibiotics leucinostatins that show extensive biological activities, including antimalarial, antiviral, antibacterial, antifungal, and antitumor activities, as well as phytotoxic. The protein is Transcription regulator lscL of Purpureocillium lilacinum (Paecilomyces lilacinus).